Here is a 396-residue protein sequence, read N- to C-terminus: Probable sugar efflux transporter (396 aa).

Topologically, residues methionine 1–arginine 14 are cytoplasmic. The helical transmembrane segment at valine 15–leucine 35 threads the bilayer. Over leucine 36–glutamine 49 the chain is Periplasmic. Residues valine 50–leucine 70 traverse the membrane as a helical segment. The Cytoplasmic portion of the chain corresponds to leucine 71–leucine 80. Residues leucine 81–phenylalanine 101 form a helical membrane-spanning segment. A topological domain (periplasmic) is located at residue threonine 102. Residues valine 103–alanine 123 traverse the membrane as a helical segment. Residues serine 124–arginine 135 are Cytoplasmic-facing. The helical transmembrane segment at alanine 136–isoleucine 156 threads the bilayer. Topologically, residues glycine 157–threonine 168 are periplasmic. The chain crosses the membrane as a helical span at residues threonine 169–proline 189. Residues lysine 190–arginine 208 lie on the Cytoplasmic side of the membrane. A helical transmembrane segment spans residues proline 209 to tyrosine 229. Topologically, residues serine 230 to asparagine 245 are periplasmic. Residues phenylalanine 246–glycine 266 traverse the membrane as a helical segment. Residues lysine 267–serine 274 lie on the Cytoplasmic side of the membrane. Residues serine 275 to alanine 295 traverse the membrane as a helical segment. At glutamate 296–histidine 300 the chain is on the periplasmic side. A helical transmembrane segment spans residues leucine 301 to valine 321. At lysine 322–aspartate 332 the chain is on the cytoplasmic side. Residues valine 333–glycine 353 form a helical membrane-spanning segment. Over asparagine 354–serine 363 the chain is Periplasmic. A helical membrane pass occupies residues alanine 364–phenylalanine 384. Residues arginine 385–histidine 396 are Cytoplasmic-facing.

The protein belongs to the major facilitator superfamily. SotB (TC 2.A.1.2) family.

It localises to the cell inner membrane. Involved in the efflux of sugars. The physiological role may be the reduction of the intracellular concentration of toxic sugars or sugar metabolites. In Salmonella typhimurium (strain LT2 / SGSC1412 / ATCC 700720), this protein is Probable sugar efflux transporter.